Consider the following 120-residue polypeptide: NADH-ubiquinone oxidoreductase chain 3 (120 aa).

3 helical membrane-spanning segments follow: residues 10–30 (ILILFFISLGLSIILFFLGYF), 62–82 (FYLVAILFLIFDLEITFLFPF), and 89–109 (MTLFSYSIMLIFLIILTIGFI).

This sequence belongs to the complex I subunit 3 family.

It localises to the mitochondrion membrane. The enzyme catalyses a ubiquinone + NADH + 5 H(+)(in) = a ubiquinol + NAD(+) + 4 H(+)(out). Its function is as follows. Core subunit of the mitochondrial membrane respiratory chain NADH dehydrogenase (Complex I) that is believed to belong to the minimal assembly required for catalysis. Complex I functions in the transfer of electrons from NADH to the respiratory chain. The immediate electron acceptor for the enzyme is believed to be ubiquinone. This is NADH-ubiquinone oxidoreductase chain 3 (nad3) from Dictyostelium citrinum (Slime mold).